A 1378-amino-acid chain; its full sequence is DNA-directed RNA polymerase subunit beta (1378 aa).

Belongs to the RNA polymerase beta chain family. The RNAP catalytic core consists of 2 alpha, 1 beta, 1 beta' and 1 omega subunit. When a sigma factor is associated with the core the holoenzyme is formed, which can initiate transcription.

It catalyses the reaction RNA(n) + a ribonucleoside 5'-triphosphate = RNA(n+1) + diphosphate. Its function is as follows. DNA-dependent RNA polymerase catalyzes the transcription of DNA into RNA using the four ribonucleoside triphosphates as substrates. This is DNA-directed RNA polymerase subunit beta from Agrobacterium fabrum (strain C58 / ATCC 33970) (Agrobacterium tumefaciens (strain C58)).